The following is a 146-amino-acid chain: Transmembrane protein 207 (146 aa).

An N-terminal signal peptide occupies residues 1–29 (MSRSRLFSVTSAISTIGILCLPLFQLVLS). The helical transmembrane segment at 52-72 (IWILLLLVLVAALLCGAVVLC) threads the bilayer.

As to quaternary structure, interacts with WWOX. As to expression, expressed in some signet-ring cell carcinoma, especially those showing high invasion and metastatic activity (at protein level).

It localises to the membrane. The chain is Transmembrane protein 207 (TMEM207) from Homo sapiens (Human).